Reading from the N-terminus, the 115-residue chain is Histidine-rich carboxyl terminus protein 1 (115 aa).

Residues A9–A29 traverse the membrane as a helical segment. The disordered stretch occupies residues G86 to R115. The span at L87 to R115 shows a compositional bias: basic residues.

The protein localises to the membrane. The protein is Histidine-rich carboxyl terminus protein 1 (HRCT1) of Homo sapiens (Human).